The following is a 243-amino-acid chain: Uridylate kinase (243 aa).

Residue 15 to 18 coordinates ATP; sequence KLSG. The interval 23-28 is involved in allosteric activation by GTP; the sequence is GSEGFG. G57 provides a ligand contact to UMP. ATP-binding residues include G58 and R62. Residues D77 and 138-145 contribute to the UMP site; that span reads TGNPFFTT. Residues T165, Y171, and D174 each coordinate ATP.

It belongs to the UMP kinase family. In terms of assembly, homohexamer.

It is found in the cytoplasm. The catalysed reaction is UMP + ATP = UDP + ADP. It participates in pyrimidine metabolism; CTP biosynthesis via de novo pathway; UDP from UMP (UMPK route): step 1/1. With respect to regulation, allosterically activated by GTP. Inhibited by UTP. Functionally, catalyzes the reversible phosphorylation of UMP to UDP. The sequence is that of Uridylate kinase from Vibrio cholerae serotype O1 (strain ATCC 39541 / Classical Ogawa 395 / O395).